We begin with the raw amino-acid sequence, 690 residues long: Elongation factor G (690 aa).

Positions 8-283 constitute a tr-type G domain; that stretch reads EDYRNFGIMA…AVVDYLPSPI (276 aa). GTP contacts are provided by residues 17–24, 81–85, and 135–138; these read AHIDAGKT, DTPGH, and NKMD.

This sequence belongs to the TRAFAC class translation factor GTPase superfamily. Classic translation factor GTPase family. EF-G/EF-2 subfamily.

It is found in the cytoplasm. Catalyzes the GTP-dependent ribosomal translocation step during translation elongation. During this step, the ribosome changes from the pre-translocational (PRE) to the post-translocational (POST) state as the newly formed A-site-bound peptidyl-tRNA and P-site-bound deacylated tRNA move to the P and E sites, respectively. Catalyzes the coordinated movement of the two tRNA molecules, the mRNA and conformational changes in the ribosome. This is Elongation factor G from Bradyrhizobium diazoefficiens (strain JCM 10833 / BCRC 13528 / IAM 13628 / NBRC 14792 / USDA 110).